We begin with the raw amino-acid sequence, 225 residues long: ATP-dependent dethiobiotin synthetase BioD (225 aa).

Asn-13 to Leu-18 serves as a coordination point for ATP. Mg(2+) is bound at residue Thr-17. The active site involves Lys-38. Thr-42 is a binding site for substrate. ATP-binding positions include Asp-55, Glu-116–Gly-119, Asn-176–His-177, and Pro-205–Leu-207. Mg(2+) contacts are provided by Asp-55 and Glu-116.

This sequence belongs to the dethiobiotin synthetase family. Homodimer. It depends on Mg(2+) as a cofactor.

It is found in the cytoplasm. It carries out the reaction (7R,8S)-7,8-diammoniononanoate + CO2 + ATP = (4R,5S)-dethiobiotin + ADP + phosphate + 3 H(+). The protein operates within cofactor biosynthesis; biotin biosynthesis; biotin from 7,8-diaminononanoate: step 1/2. Its function is as follows. Catalyzes a mechanistically unusual reaction, the ATP-dependent insertion of CO2 between the N7 and N8 nitrogen atoms of 7,8-diaminopelargonic acid (DAPA, also called 7,8-diammoniononanoate) to form a ureido ring. The protein is ATP-dependent dethiobiotin synthetase BioD of Baumannia cicadellinicola subsp. Homalodisca coagulata.